A 523-amino-acid polypeptide reads, in one-letter code: Protein nucleotidyltransferase YdiU (523 aa).

Positions 101, 103, 104, 128, 140, 141, 198, and 205 each coordinate ATP. Asp275 functions as the Proton acceptor in the catalytic mechanism. Residues Asn276 and Asp285 each contribute to the Mg(2+) site. Asp285 is a binding site for ATP.

The protein belongs to the SELO family. It depends on Mg(2+) as a cofactor. The cofactor is Mn(2+).

The catalysed reaction is L-seryl-[protein] + ATP = 3-O-(5'-adenylyl)-L-seryl-[protein] + diphosphate. It carries out the reaction L-threonyl-[protein] + ATP = 3-O-(5'-adenylyl)-L-threonyl-[protein] + diphosphate. It catalyses the reaction L-tyrosyl-[protein] + ATP = O-(5'-adenylyl)-L-tyrosyl-[protein] + diphosphate. The enzyme catalyses L-histidyl-[protein] + UTP = N(tele)-(5'-uridylyl)-L-histidyl-[protein] + diphosphate. The catalysed reaction is L-seryl-[protein] + UTP = O-(5'-uridylyl)-L-seryl-[protein] + diphosphate. It carries out the reaction L-tyrosyl-[protein] + UTP = O-(5'-uridylyl)-L-tyrosyl-[protein] + diphosphate. In terms of biological role, nucleotidyltransferase involved in the post-translational modification of proteins. It can catalyze the addition of adenosine monophosphate (AMP) or uridine monophosphate (UMP) to a protein, resulting in modifications known as AMPylation and UMPylation. This is Protein nucleotidyltransferase YdiU from Aromatoleum aromaticum (strain DSM 19018 / LMG 30748 / EbN1) (Azoarcus sp. (strain EbN1)).